A 920-amino-acid chain; its full sequence is 3-hydroxy-3-methylglutaryl-coenzyme A reductase (920 aa).

The chain crosses the membrane as a helical span at residues 12-32; the sequence is FCASHPWEVIVALLTITACML. The N-linked (GlcNAc...) asparagine glycan is linked to Asn37. Positions 62 to 85 are disordered; that stretch reads GAGSGASGTIPPSSMGGSATSSRH. Positions 71 to 82 are enriched in polar residues; it reads IPPSSMGGSATS. Positions 106–263 constitute an SSD domain; the sequence is DVILMTIVRC…MTFYPACLSL (158 aa). Helical transmembrane passes span 107 to 129, 136 to 156, 170 to 190, 208 to 228, and 237 to 257; these read VILM…CSLH, VLGI…TAII, LFFL…QLAL, LLGP…GVGT, and VLCM…MTFY. N-linked (GlcNAc...) asparagine glycosylation is found at Asn342 and Asn346. A helical transmembrane segment spans residues 364-384; it reads SADHIVISIVLIALVVKFICF. Positions 385–498 are linker; it reads DNRDPLPDQL…EEIVSIVHAG (114 aa). N-linked (GlcNAc...) asparagine glycans are attached at residues Asn443 and Asn475. The tract at residues 499–829 is catalytic; that stretch reads GTHCPLHKIE…TCTMPSLEVG (331 aa). Catalysis depends on charge relay system residues Glu586, Lys717, and Asp793. Residues Asn797 and Asn802 are each glycosylated (N-linked (GlcNAc...) asparagine). The active-site Proton donor is His892. Residues Asn896 and Asn910 are each glycosylated (N-linked (GlcNAc...) asparagine).

Belongs to the HMG-CoA reductase family. As to expression, highly expressed in embryonic gonadal mesoderm, where expression is initially broad, and then becomes restricted to a segmental pattern at stage 11. Expression is then further restricted to a cluster of cells in each of parasegments 10, 11 and 12, corresponding to the developing gonadal mesoderm. Not expressed in pole cells.

It localises to the endoplasmic reticulum membrane. It carries out the reaction (R)-mevalonate + 2 NADP(+) + CoA = (3S)-3-hydroxy-3-methylglutaryl-CoA + 2 NADPH + 2 H(+). Its pathway is metabolic intermediate biosynthesis; (R)-mevalonate biosynthesis; (R)-mevalonate from acetyl-CoA: step 3/3. With respect to regulation, the activity of HMG-CoA-reductase is suppressed by exogenous mevalonate. Synthesis of mevalonate for the production of non-sterol isoprenoids, which are essential for growth differentiation. Provides spatial information during embryogenesis to guide migrating primordial germ cells (the pole cells) from the ectoderm to the mesoderm. Also required for association of the pole cells with the gonadal mesoderm. The chain is 3-hydroxy-3-methylglutaryl-coenzyme A reductase (Hmgcr) from Drosophila melanogaster (Fruit fly).